The sequence spans 120 residues: Immunoglobulin kappa variable 2-24 (120 aa).

Positions 1–19 (MRLLAQLLGLLMLWVPGSS) are cleaved as a signal peptide. In terms of domain architecture, Ig-like spans 20–120 (GDIVMTQTPL…YYCMQATQFP (101 aa)). The tract at residues 21 to 43 (DIVMTQTPLSSPVTLGQPASISC) is framework-1. The cysteines at positions 43 and 113 are disulfide-linked. A complementarity-determining-1 region spans residues 44–59 (RSSQSLVHSDGNTYLS). The framework-2 stretch occupies residues 60-74 (WLQQRPGQPPRLLIY). Positions 75–81 (KISNRFS) are complementarity-determining-2. The segment at 82–113 (GVPDRFSGSGAGTDFTLKISRVEAEDVGVYYC) is framework-3. A complementarity-determining-3 region spans residues 114 to 120 (MQATQFP).

Immunoglobulins are composed of two identical heavy chains and two identical light chains; disulfide-linked.

The protein resides in the secreted. Its subcellular location is the cell membrane. Its function is as follows. V region of the variable domain of immunoglobulin light chains that participates in the antigen recognition. Immunoglobulins, also known as antibodies, are membrane-bound or secreted glycoproteins produced by B lymphocytes. In the recognition phase of humoral immunity, the membrane-bound immunoglobulins serve as receptors which, upon binding of a specific antigen, trigger the clonal expansion and differentiation of B lymphocytes into immunoglobulins-secreting plasma cells. Secreted immunoglobulins mediate the effector phase of humoral immunity, which results in the elimination of bound antigens. The antigen binding site is formed by the variable domain of one heavy chain, together with that of its associated light chain. Thus, each immunoglobulin has two antigen binding sites with remarkable affinity for a particular antigen. The variable domains are assembled by a process called V-(D)-J rearrangement and can then be subjected to somatic hypermutations which, after exposure to antigen and selection, allow affinity maturation for a particular antigen. This chain is Immunoglobulin kappa variable 2-24, found in Homo sapiens (Human).